The sequence spans 397 residues: Argininosuccinate synthase (397 aa).

ATP is bound at residue 8–16 (AYSGGLDTS). L-citrulline contacts are provided by Tyr-86 and Ser-91. Gly-116 lines the ATP pocket. Thr-118, Asn-122, and Asp-123 together coordinate L-aspartate. Residue Asn-122 participates in L-citrulline binding. Arg-126, Ser-175, Ser-184, Glu-260, and Tyr-272 together coordinate L-citrulline.

It belongs to the argininosuccinate synthase family. Type 1 subfamily. As to quaternary structure, homotetramer.

Its subcellular location is the cytoplasm. The enzyme catalyses L-citrulline + L-aspartate + ATP = 2-(N(omega)-L-arginino)succinate + AMP + diphosphate + H(+). It participates in amino-acid biosynthesis; L-arginine biosynthesis; L-arginine from L-ornithine and carbamoyl phosphate: step 2/3. This Clostridium botulinum (strain Langeland / NCTC 10281 / Type F) protein is Argininosuccinate synthase.